The following is a 412-amino-acid chain: NADH-quinone oxidoreductase subunit D (412 aa).

It belongs to the complex I 49 kDa subunit family. As to quaternary structure, NDH-1 is composed of 14 different subunits. Subunits NuoB, C, D, E, F, and G constitute the peripheral sector of the complex.

The protein resides in the cell inner membrane. It catalyses the reaction a quinone + NADH + 5 H(+)(in) = a quinol + NAD(+) + 4 H(+)(out). NDH-1 shuttles electrons from NADH, via FMN and iron-sulfur (Fe-S) centers, to quinones in the respiratory chain. The immediate electron acceptor for the enzyme in this species is believed to be ubiquinone. Couples the redox reaction to proton translocation (for every two electrons transferred, four hydrogen ions are translocated across the cytoplasmic membrane), and thus conserves the redox energy in a proton gradient. The protein is NADH-quinone oxidoreductase subunit D of Sulfurimonas denitrificans (strain ATCC 33889 / DSM 1251) (Thiomicrospira denitrificans (strain ATCC 33889 / DSM 1251)).